The sequence spans 438 residues: Aflatoxin cluster transcriptional coactivator aflS (438 aa).

Residues 65 to 134 form the HTH iclR-type domain; sequence LALYNQLLAC…PSPGHVAHSV (70 aa). The segment at residues 95-114 is a DNA-binding region (H-T-H motif); the sequence is FEDVADIAGVPECRLRRLVR.

Interacts with aflR.

The protein localises to the nucleus. It is found in the endosome. In terms of biological role, transcription coactivator involved in regulation of the aflatoxin biosynthesis gene cluster with aflR. The ratio of the expression data between aflS:aflR plays a crucial role in the regulation of aflatoxins production. A high ratio, produced at a range between 17 and 30 degrees Celsius, corresponds with the production profile of aflatoxin G1 biosynthesis. A low ratio, produced over 30 degrees Celsius, is related to aflatoxin B1 biosynthesis. AflJ may act in aflR transport to or from the nucleus, thus controlling the availability of aflR for transcriptional activation of aflatoxin biosynthesis cluster genes. AflJ may also assist in directing endosomes to the cytoplasmic membrane for aflatoxin export. The polypeptide is Aflatoxin cluster transcriptional coactivator aflS (Aspergillus parasiticus (strain ATCC 56775 / NRRL 5862 / SRRC 143 / SU-1)).